The primary structure comprises 64 residues: Prokaryotic ubiquitin-like protein Pup (64 aa).

Residues 1–11 show a composition bias toward basic and acidic residues; that stretch reads MAQEQTKRTGG. The disordered stretch occupies residues 1–37; it reads MAQEQTKRTGGGDEDDTPGADGAAGQERREKLAEDTD. Residues 21 to 58 are ARC ATPase binding; it reads DGAAGQERREKLAEDTDDLLDEIDDVLEENAEDFVRAY. A coiled-coil region spans residues 24–52; sequence AGQERREKLAEDTDDLLDEIDDVLEENAE. Position 64 is a deamidated glutamine (Q64). Q64 participates in a covalent cross-link: Isoglutamyl lysine isopeptide (Gln-Lys) (interchain with K-? in acceptor proteins).

The protein belongs to the prokaryotic ubiquitin-like protein family. As to quaternary structure, strongly interacts with the proteasome-associated ATPase ARC through a hydrophobic interface; the interacting region of Pup lies in its C-terminal half. There is one Pup binding site per ARC hexamer ring. Is modified by deamidation of its C-terminal glutamine to glutamate by the deamidase Dop, a prerequisite to the subsequent pupylation process.

Its pathway is protein degradation; proteasomal Pup-dependent pathway. In terms of biological role, protein modifier that is covalently attached to lysine residues of substrate proteins, thereby targeting them for proteasomal degradation. The tagging system is termed pupylation. The sequence is that of Prokaryotic ubiquitin-like protein Pup from Rhodococcus jostii (strain RHA1).